Consider the following 439-residue polypeptide: GlutamylGlutaminyl-tRNA synthetase (439 aa).

Positions proline 6 to asparagine 16 match the 'HIGH' region motif. Positions lysine 232 to arginine 236 match the 'KMSKS' region motif. Lysine 235 is an ATP binding site.

The protein belongs to the class-I aminoacyl-tRNA synthetase family. Glutamate--tRNA ligase type 1 subfamily. As to quaternary structure, monomer.

The protein localises to the cytoplasm. It catalyses the reaction tRNA(Glu) + L-glutamate + ATP = L-glutamyl-tRNA(Gln) + AMP + diphosphate. Its function is as follows. Aminoacylates tRNA(Gln) with glutamate. Does not aminoacylate tRNA(Glu). The chain is GlutamylGlutaminyl-tRNA synthetase (gltX2) from Helicobacter pylori (strain ATCC 700392 / 26695) (Campylobacter pylori).